A 348-amino-acid polypeptide reads, in one-letter code: Killer cell immunoglobulin-like receptor 2DL2 (348 aa).

The N-terminal stretch at Met-1–Pro-21 is a signal peptide. Residues His-22–His-245 lie on the Extracellular side of the membrane. 2 Ig-like C2-type domains span residues Glu-42–Ser-107 and Gly-142–Ser-205. 2 cysteine pairs are disulfide-bonded: Cys-49/Cys-100 and Cys-149/Cys-198. Asn-84, Asn-178, and Asn-211 each carry an N-linked (GlcNAc...) asparagine glycan. The helical transmembrane segment at Ile-246–Leu-264 threads the bilayer. The Cytoplasmic segment spans residues His-265–Pro-348.

Belongs to the immunoglobulin superfamily.

The protein resides in the cell membrane. Receptor on natural killer (NK) cells for HLA-Cw1, 3, 7, and 8 allotypes. Inhibits the activity of NK cells thus preventing cell lysis. The protein is Killer cell immunoglobulin-like receptor 2DL2 of Homo sapiens (Human).